Reading from the N-terminus, the 457-residue chain is Probable mitochondrial-processing peptidase subunit beta (457 aa).

Position 66 (His66) interacts with Zn(2+). The Proton acceptor role is filled by Glu69. 2 residues coordinate Zn(2+): His70 and Glu146.

It belongs to the peptidase M16 family. As to quaternary structure, heterodimer of mas2 (alpha) and qcr1 (beta) subunits, forming the mitochondrial processing protease (MPP) in which mas2 is involved in substrate recognition and binding and qcr1 is the catalytic subunit. It depends on Zn(2+) as a cofactor.

The protein resides in the mitochondrion matrix. The catalysed reaction is Release of N-terminal transit peptides from precursor proteins imported into the mitochondrion, typically with Arg in position P2.. Its activity is regulated as follows. Binding to mas2 is required for catalytic activity. Functionally, catalytic subunit of the essential mitochondrial processing protease (MPP), which cleaves the mitochondrial sequence off newly imported precursors proteins. Preferentially, cleaves after an arginine at position P2. The polypeptide is Probable mitochondrial-processing peptidase subunit beta (qcr1) (Schizosaccharomyces pombe (strain 972 / ATCC 24843) (Fission yeast)).